Here is a 587-residue protein sequence, read N- to C-terminus: MSAINHLCLKLILASFAIINTITALTNDGTGHLEFLLQHEEEMYYATTLDIGTPSQSLTVLFDTGSADFWVMDSSNPFCLPNSNTSSYSNATYNGEEVKPSIDCRSMSTYNEHRSSTYQYLENGRFYITYADGTFADGSWGTETVSINGIDIPNIQFGVAKYATTPVSGVLGIGFPRRESVKGYEGAPNEYYPNFPQILKSEKIIDVVAYSLFLNSPDSGTGSIVFGAIDESKFSGDLFTFPMVNEYPTIVDAPATLAMTIQGLGAQNKSSCEHETFTTTKYPVLLDSGTSLLNAPKVIADKMASFVNASYSEEEGIYILDCPVSVGDVEYNFDFGDLQISVPLSSLILSPETEGSYCGFAVQPTNDSMVLGDVFLSSAYVVFDLDNYKISLAQANWNASEVSKKLVNIQTDGSISGAKIATAEPWSTNEPFTVTSDIYSSTGCKSRPFLQSSTASSLIAETNVQSRNCSTKMPGTRSTTVLSKPTQNSAMHQSTGAVTQTSNETKLELSSTMANSGSVSLPTSNSIDKEFEHSKSQTTSDPSVAEHSTFNQTFVHETKYRPTHKTVITETVTKYSTVLINVCKPTY.

An N-terminal signal peptide occupies residues 1–24; sequence MSAINHLCLKLILASFAIINTITA. A Peptidase A1 domain is found at 45 to 393; that stretch reads YATTLDIGTP…DLDNYKISLA (349 aa). Residue Asp63 is part of the active site. 3 N-linked (GlcNAc...) asparagine glycosylation sites follow: Asn84, Asn90, and Asn268. Asp287 is an active-site residue. Asn308 is a glycosylation site (N-linked (GlcNAc...) asparagine). Cys322 and Cys358 form a disulfide bridge. N-linked (GlcNAc...) asparagine glycosylation is found at Asn366, Asn398, Asn468, Asn503, and Asn551. The disordered stretch occupies residues 466-505; that stretch reads SRNCSTKMPGTRSTTVLSKPTQNSAMHQSTGAVTQTSNET.

This sequence belongs to the peptidase A1 family.

Its subcellular location is the secreted. It catalyses the reaction Selective cleavage of 6-Leu-|-Lys-7 bond in the pheromone alpha-mating factor.. This protein called 'barrier activity' is excreted by yeast cells mating type a. It is probably a protease that cleaves alpha-factor and thus acts as an antagonist of this mating pheromone and establishes optimal pheromone concentration for conjugation. The protein is Barrierpepsin (BAR1) of Saccharomyces cerevisiae (strain ATCC 204508 / S288c) (Baker's yeast).